The sequence spans 86 residues: Omega-theraphotoxin-Hhn1e (86 aa).

An N-terminal signal peptide occupies residues 1-21 (MKSIVFVALFGLALLAVVCSA). Residues 22–50 (SEGAHKELLKEVVRAMVVDKTDAVQAEER) constitute a propeptide that is removed on maturation. Intrachain disulfides connect Cys-52/Cys-66 and Cys-65/Cys-78.

The protein belongs to the neurotoxin 10 (Hwtx-1) family. 17 (Hntx-9) subfamily. In terms of tissue distribution, expressed by the venom gland.

The protein localises to the secreted. In terms of biological role, ion channel inhibitor. The chain is Omega-theraphotoxin-Hhn1e from Cyriopagopus hainanus (Chinese bird spider).